The primary structure comprises 140 residues: MRHRVGGRKLQRTASHRTALFRNQSAALIKHEQILTTLAKAKELRPYVEKLITLAKKGGLANRRLAHARLQDDTQLKKLFEVLAERYASRNGGYTRIVKAGIRASDAASMAIIEFVDRDVSAKGQDSGPVETDEDVAEAA.

The protein belongs to the bacterial ribosomal protein bL17 family. In terms of assembly, part of the 50S ribosomal subunit. Contacts protein L32.

The protein is Large ribosomal subunit protein bL17 of Rhizorhabdus wittichii (strain DSM 6014 / CCUG 31198 / JCM 15750 / NBRC 105917 / EY 4224 / RW1) (Sphingomonas wittichii).